The primary structure comprises 603 residues: Elongation factor 4 (603 aa).

The 185-residue stretch at 7–191 (DNIRNFSIVA…AIVTRLPPPQ (185 aa)) folds into the tr-type G domain. Residues 19 to 24 (DHGKST) and 138 to 141 (NKVD) contribute to the GTP site.

This sequence belongs to the TRAFAC class translation factor GTPase superfamily. Classic translation factor GTPase family. LepA subfamily.

Its subcellular location is the cell inner membrane. It catalyses the reaction GTP + H2O = GDP + phosphate + H(+). In terms of biological role, required for accurate and efficient protein synthesis under certain stress conditions. May act as a fidelity factor of the translation reaction, by catalyzing a one-codon backward translocation of tRNAs on improperly translocated ribosomes. Back-translocation proceeds from a post-translocation (POST) complex to a pre-translocation (PRE) complex, thus giving elongation factor G a second chance to translocate the tRNAs correctly. Binds to ribosomes in a GTP-dependent manner. This Rhodopseudomonas palustris (strain HaA2) protein is Elongation factor 4.